Consider the following 1445-residue polypeptide: ABC-type transporter FGSG_00046 (1445 aa).

Helical transmembrane passes span 21-41, 77-97, 119-138, 150-170, 187-207, 255-277, 297-317, 368-388, 392-412, 481-501, and 520-540; these read LFEE…MLLV, LILW…AAAL, PSSL…VTRV, ISIL…FESL, EIVG…FILG, TLLR…PLLL, YGLI…TALA, LQFV…IFLL, VALG…GTVL, VFST…YVLM, and SLFS…PAIF. An ABC transmembrane type-1 1 domain is found at 259 to 541; sequence GGLCRLFTAL…FLTSVPAIFS (283 aa). Residues 595 to 821 form the ABC transporter 1 domain; it reads IRDGSVRWKG…DEIEASTYSR (227 aa). 627 to 634 contributes to the ATP binding site; the sequence is GSVGSGKS. The disordered stretch occupies residues 803 to 850; sequence RNTQKDMQDDEIEASTYSREQNGPKKQEEDANHESNQSPETSQEHELA. Basic and acidic residues predominate over residues 824-835; it reads NGPKKQEEDANH. 6 helical membrane passes run 868 to 888, 912 to 932, 1004 to 1024, 1026 to 1046, 1116 to 1136, and 1147 to 1167; these read GMGF…WQNF, IGVY…VTWF, IPLT…QLVM, SIGT…LAII, LTLV…GVTI, and IGLA…LLTW. Positions 974-1173 constitute an ABC transmembrane type-1 2 domain; the sequence is HRAPMSYFES…LLTWWTMMEA (200 aa). The ABC transporter 2 domain occupies 1210 to 1441; sequence IELKELSASY…DVSLFQDLFS (232 aa). 1244-1251 provides a ligand contact to ATP; it reads GRTGSGKT.

This sequence belongs to the ABC transporter superfamily. ABCC family.

It is found in the cell membrane. Functionally, ABC-type transporter; part of the gene cluster that mediates the biosynthesis of gramillins A and B, bicyclic lipopeptides that induce cell death in maize leaves but not in wheat leaves. May be involved in the secretion of gramillins. The chain is ABC-type transporter FGSG_00046 from Gibberella zeae (strain ATCC MYA-4620 / CBS 123657 / FGSC 9075 / NRRL 31084 / PH-1) (Wheat head blight fungus).